Here is a 372-residue protein sequence, read N- to C-terminus: 4-hydroxy-3-methylbut-2-en-1-yl diphosphate synthase (flavodoxin) (372 aa).

Positions 270, 273, 305, and 312 each coordinate [4Fe-4S] cluster.

This sequence belongs to the IspG family. It depends on [4Fe-4S] cluster as a cofactor.

It catalyses the reaction (2E)-4-hydroxy-3-methylbut-2-enyl diphosphate + oxidized [flavodoxin] + H2O + 2 H(+) = 2-C-methyl-D-erythritol 2,4-cyclic diphosphate + reduced [flavodoxin]. Its pathway is isoprenoid biosynthesis; isopentenyl diphosphate biosynthesis via DXP pathway; isopentenyl diphosphate from 1-deoxy-D-xylulose 5-phosphate: step 5/6. Converts 2C-methyl-D-erythritol 2,4-cyclodiphosphate (ME-2,4cPP) into 1-hydroxy-2-methyl-2-(E)-butenyl 4-diphosphate. This is 4-hydroxy-3-methylbut-2-en-1-yl diphosphate synthase (flavodoxin) from Shewanella amazonensis (strain ATCC BAA-1098 / SB2B).